We begin with the raw amino-acid sequence, 467 residues long: ATP-dependent protease ATPase subunit HslU (467 aa).

ATP contacts are provided by residues Val22 and 64–69 (GVGKTE). Residues 149 to 192 (QTNNPLESLFGGAIPNFGQNNEDEEEPPTEEIKTKRSEIKRQLE) form a disordered region. Residues 178-192 (EEIKTKRSEIKRQLE) show a composition bias toward basic and acidic residues. The ATP site is built by Asp280, Glu345, and Arg417.

This sequence belongs to the ClpX chaperone family. HslU subfamily. A double ring-shaped homohexamer of HslV is capped on each side by a ring-shaped HslU homohexamer. The assembly of the HslU/HslV complex is dependent on binding of ATP.

It is found in the cytoplasm. In terms of biological role, ATPase subunit of a proteasome-like degradation complex; this subunit has chaperone activity. The binding of ATP and its subsequent hydrolysis by HslU are essential for unfolding of protein substrates subsequently hydrolyzed by HslV. HslU recognizes the N-terminal part of its protein substrates and unfolds these before they are guided to HslV for hydrolysis. In Staphylococcus aureus (strain bovine RF122 / ET3-1), this protein is ATP-dependent protease ATPase subunit HslU.